A 269-amino-acid polypeptide reads, in one-letter code: UPF0162 protein YchA (269 aa).

It belongs to the UPF0162 family.

This chain is UPF0162 protein YchA (ychA), found in Escherichia coli O157:H7.